The primary structure comprises 139 residues: Fluoroacetyl-CoA thioesterase (139 aa).

Residues 40–50 (FATGFMVGLME) and Gly69 contribute to the substrate site. Active-site residues include Thr42 and Glu50. CoA is bound by residues Gly69 and 76–77 (HT). Residue His76 is part of the active site. Substrate is bound at residue Arg120.

In terms of assembly, homodimer.

The catalysed reaction is fluoroacetyl-CoA + H2O = fluoroacetate + CoA + H(+). Functionally, hydrolyzes fluoroacetyl-CoA before it can react with citrate synthase, and thus confers fluoroacetate resistance. Cannot use acetyl-CoA as substrate. The protein is Fluoroacetyl-CoA thioesterase (flK) of Streptantibioticus cattleyicolor (Streptomyces cattleya).